We begin with the raw amino-acid sequence, 376 residues long: MSTVPPPLSVLLELTHRCPLACPYCSNPIALAALREEMDTAGWRSLLEQAAEMGVLQAHFSGGEPMLRKDLPELVAHARALGLYSNLITSGVAGGEPMLDQLQAAGLEHVQLSVQDVDPAGADHIAGYRNSLSKKRAFAAAVRARGLPLTLNAVIHRHNAERVPGMIALALEWGAERIEVAHTQYYGWGLRNRAALMPSREQLAATIVAVETARRSLGDQLAIDFVTPDYYARQPKPCMGGWAQRFVNISPRGDVLPCHAAETIDGLQFEKLRDRSLADIWNHGEAFARFRGTAWMPEVCQGCPKREIDWGGCRCQALALAGDAATLDPVCERSPAHAGIRATAEREAASPAPDFIYRRPERPAAVAAEAAISDTE.

The region spanning 4-219 (VPPPLSVLLE…VETARRSLGD (216 aa)) is the Radical SAM core domain. [4Fe-4S] cluster is bound by residues Cys-18, Cys-22, and Cys-25.

The protein belongs to the radical SAM superfamily. PqqE family. As to quaternary structure, interacts with PqqD. The interaction is necessary for activity of PqqE. It depends on [4Fe-4S] cluster as a cofactor.

The enzyme catalyses [PQQ precursor protein] + S-adenosyl-L-methionine = E-Y cross-linked-[PQQ precursor protein] + 5'-deoxyadenosine + L-methionine + H(+). The protein operates within cofactor biosynthesis; pyrroloquinoline quinone biosynthesis. Catalyzes the cross-linking of a glutamate residue and a tyrosine residue in the PqqA protein as part of the biosynthesis of pyrroloquinoline quinone (PQQ). The chain is PqqA peptide cyclase from Xanthomonas campestris pv. campestris (strain B100).